The primary structure comprises 370 residues: Dual-specificity RNA methyltransferase RlmN (370 aa).

The Proton acceptor role is filled by Glu-93. Residues 99–337 enclose the Radical SAM core domain; it reads EEGRGTLCVS…VTTVRKTRGD (239 aa). Cysteines 106 and 343 form a disulfide. [4Fe-4S] cluster contacts are provided by Cys-113, Cys-117, and Cys-120. S-adenosyl-L-methionine contacts are provided by residues 167 to 168, Ser-199, 221 to 223, and Asn-300; these read GE and SLH. The active-site S-methylcysteine intermediate is the Cys-343.

This sequence belongs to the radical SAM superfamily. RlmN family. The cofactor is [4Fe-4S] cluster.

It is found in the cytoplasm. The catalysed reaction is adenosine(2503) in 23S rRNA + 2 reduced [2Fe-2S]-[ferredoxin] + 2 S-adenosyl-L-methionine = 2-methyladenosine(2503) in 23S rRNA + 5'-deoxyadenosine + L-methionine + 2 oxidized [2Fe-2S]-[ferredoxin] + S-adenosyl-L-homocysteine. The enzyme catalyses adenosine(37) in tRNA + 2 reduced [2Fe-2S]-[ferredoxin] + 2 S-adenosyl-L-methionine = 2-methyladenosine(37) in tRNA + 5'-deoxyadenosine + L-methionine + 2 oxidized [2Fe-2S]-[ferredoxin] + S-adenosyl-L-homocysteine. Its function is as follows. Specifically methylates position 2 of adenine 2503 in 23S rRNA and position 2 of adenine 37 in tRNAs. m2A2503 modification seems to play a crucial role in the proofreading step occurring at the peptidyl transferase center and thus would serve to optimize ribosomal fidelity. This is Dual-specificity RNA methyltransferase RlmN from Francisella tularensis subsp. holarctica (strain LVS).